Consider the following 251-residue polypeptide: Probable transcriptional regulatory protein NFA_37020 (251 aa).

This sequence belongs to the TACO1 family.

It is found in the cytoplasm. In Nocardia farcinica (strain IFM 10152), this protein is Probable transcriptional regulatory protein NFA_37020.